A 148-amino-acid polypeptide reads, in one-letter code: Large ribosomal subunit protein bL9 (148 aa).

It belongs to the bacterial ribosomal protein bL9 family.

Functionally, binds to the 23S rRNA. This is Large ribosomal subunit protein bL9 from Hahella chejuensis (strain KCTC 2396).